Here is a 217-residue protein sequence, read N- to C-terminus: Large ribosomal subunit protein uL1 (217 aa).

The protein belongs to the universal ribosomal protein uL1 family. Part of the 50S ribosomal subunit.

Binds directly to 23S rRNA. The L1 stalk is quite mobile in the ribosome, and is involved in E site tRNA release. Functionally, protein L1 is also a translational repressor protein, it controls the translation of the L11 operon by binding to its mRNA. The chain is Large ribosomal subunit protein uL1 from Wolbachia pipientis wMel.